The sequence spans 513 residues: 2-isopropylmalate synthase (513 aa).

One can recognise a Pyruvate carboxyltransferase domain in the interval 5 to 268 (LIIFDTTLRD…DVGVDTTQIV (264 aa)). Asp14, His202, His204, and Asn239 together coordinate Mn(2+). The regulatory domain stretch occupies residues 394-513 (RFVSLSQRSE…KSSEKLNPQI (120 aa)).

This sequence belongs to the alpha-IPM synthase/homocitrate synthase family. LeuA type 1 subfamily. Homodimer. The cofactor is Mn(2+).

It localises to the cytoplasm. It carries out the reaction 3-methyl-2-oxobutanoate + acetyl-CoA + H2O = (2S)-2-isopropylmalate + CoA + H(+). The protein operates within amino-acid biosynthesis; L-leucine biosynthesis; L-leucine from 3-methyl-2-oxobutanoate: step 1/4. Its function is as follows. Catalyzes the condensation of the acetyl group of acetyl-CoA with 3-methyl-2-oxobutanoate (2-ketoisovalerate) to form 3-carboxy-3-hydroxy-4-methylpentanoate (2-isopropylmalate). The polypeptide is 2-isopropylmalate synthase (Ralstonia nicotianae (strain ATCC BAA-1114 / GMI1000) (Ralstonia solanacearum)).